The chain runs to 596 residues: Protein kinase C iota type (596 aa).

Residues 1-12 (MPTQRDSSTMSH) are compositionally biased toward polar residues. A disordered region spans residues 1 to 21 (MPTQRDSSTMSHTVACGGGGD). At Pro-2 the chain carries N-acetylproline. The required for interaction with RAB2 stretch occupies residues 2–28 (PTQRDSSTMSHTVACGGGGDHSHQVRV). Residues 2–253 (PTQRDSSTMS…KASSSLGLQD (252 aa)) are regulatory domain. Thr-3 carries the post-translational modification Phosphothreonine. Phosphoserine is present on residues Ser-7 and Ser-8. Residue Thr-9 is modified to Phosphothreonine. The PB1 domain occupies 25 to 108 (QVRVKAYYRG…SELLIHVFPC (84 aa)). The interaction with PARD6A stretch occupies residues 72 to 91 (DEEGDPCTVSSQLELEEAFR). The short motif at 125–134 (YRRGARRWRK) is the Pseudosubstrate element. The Phorbol-ester/DAG-type zinc-finger motif lies at 140-190 (GHTFQAKRFNRRAHCAICTDRIWGLGRQGYKCINCKLLVHKKCHKLVTIEC). The region spanning 254-522 (FDLLRVIGRG…FADIQGHPFF (269 aa)) is the Protein kinase domain. Position 260–268 (260–268 (IGRGSYAKV)) interacts with ATP. Tyr-265 and Tyr-280 each carry phosphotyrosine; by SRC. Residue Lys-283 coordinates ATP. Tyr-334 is subject to Phosphotyrosine; by SRC. The active-site Proton acceptor is Asp-378. Thr-412 bears the Phosphothreonine; by PDPK1 mark. Residues 523–594 (RNVDWDMMEQ…INPLLMSAEE (72 aa)) form the AGC-kinase C-terminal domain. Thr-564 is subject to Phosphothreonine.

Belongs to the protein kinase superfamily. AGC Ser/Thr protein kinase family. PKC subfamily. Forms a complex with SQSTM1 and MP2K5. Interacts directly with SQSTM1. Interacts with IKBKB. Interacts with PARD6A, PARD6B and PARD6G. Part of a quaternary complex containing aPKC, PARD3, a PARD6 protein (PARD6A, PARD6B or PARD6G) and a GTPase protein (CDC42 or RAC1). Part of a complex with LLGL1 and PARD6B. Interacts with ADAP1/CENTA1. Interaction with SMG1, through the ZN-finger domain, activates the kinase activity. Interacts with CDK7. Forms a complex with RAB2A and GAPDH involved in recruitment onto the membrane of vesicular tubular clusters (VTCs). Interacts with ECT2 ('Thr-359' phosphorylated form). Interacts with VAMP2. Interacts with WDFY2 (via WD repeats 1-3). Post-translationally, phosphorylation at Thr-412 in the activation loop is not mandatory for activation. Upon neuronal growth factor (NGF) stimulation, phosphorylated by SRC at Tyr-265, Tyr-280 and Tyr-334. Phosphorylation at Tyr-265 facilitates binding to KPNB1/importin-beta regulating entry of PRKCI into the nucleus. Phosphorylation on Tyr-334 is important for NF-kappa-B stimulation. Phosphorylated at Thr-564 during the initial phase of long term potentiation. In terms of tissue distribution, expressed in dorsal hippocampus (at protein level).

It is found in the cytoplasm. The protein resides in the membrane. Its subcellular location is the endosome. The protein localises to the nucleus. It catalyses the reaction L-seryl-[protein] + ATP = O-phospho-L-seryl-[protein] + ADP + H(+). The catalysed reaction is L-threonyl-[protein] + ATP = O-phospho-L-threonyl-[protein] + ADP + H(+). Atypical PKCs (PRKCI and PRKCZ) exhibit an elevated basal enzymatic activity (that may be due to the interaction with SMG1 or SQSTM1) and are not regulated by diacylglycerol, phosphatidylserine, phorbol esters or calcium ions. Two specific sites, Thr-412 (activation loop of the kinase domain) and Thr-564 (turn motif), need to be phosphorylated for its full activation. Might also be a target for novel lipid activators that are elevated during nutrient-stimulated insulin secretion. Calcium- and diacylglycerol-independent serine/ threonine-protein kinase that plays a general protective role against apoptotic stimuli, is involved in NF-kappa-B activation, cell survival, differentiation and polarity, and contributes to the regulation of microtubule dynamics in the early secretory pathway. Is necessary for BCR-ABL oncogene-mediated resistance to apoptotic drug in leukemia cells, protecting leukemia cells against drug-induced apoptosis. In cultured neurons, prevents amyloid beta protein-induced apoptosis by interrupting cell death process at a very early step. In glioblastoma cells, may function downstream of phosphatidylinositol 3-kinase (PI3K) and PDPK1 in the promotion of cell survival by phosphorylating and inhibiting the pro-apoptotic factor BAD. Can form a protein complex in non-small cell lung cancer (NSCLC) cells with PARD6A and ECT2 and regulate ECT2 oncogenic activity by phosphorylation, which in turn promotes transformed growth and invasion. In response to nerve growth factor (NGF), acts downstream of SRC to phosphorylate and activate IRAK1, allowing the subsequent activation of NF-kappa-B and neuronal cell survival. Functions in the organization of the apical domain in epithelial cells by phosphorylating EZR. This step is crucial for activation and normal distribution of EZR at the early stages of intestinal epithelial cell differentiation. Forms a protein complex with LLGL1 and PARD6B independently of PARD3 to regulate epithelial cell polarity. Plays a role in microtubule dynamics in the early secretory pathway through interaction with RAB2A and GAPDH and recruitment to vesicular tubular clusters (VTCs). In human coronary artery endothelial cells (HCAEC), is activated by saturated fatty acids and mediates lipid-induced apoptosis. Downstream of PI3K is required for insulin-stimulated glucose transport. Activates RAB4A and promotes its association with KIF3A which is required for the insulin-induced SLC2A4/GLUT4 translocation in adipocytes. Is essential in early embryogenesis and development of differentiating photoreceptors by playing a role in the establishment of epithelial and neuronal polarity. Involved in early synaptic long term potentiation phase in CA1 hippocampal cells and short term memory formation. This Rattus norvegicus (Rat) protein is Protein kinase C iota type (Prkci).